A 240-amino-acid polypeptide reads, in one-letter code: MKMMDANEIISFIQKSEKKTPVKVYIKGNLKEVTFPETVQAFVNKKSGVLFGEWSEIKTILDENSKYIVDYVVENDRRNSAIPMLDLKGIKARIEPGAIIRDHVEIGDNAVIMMNATINIGAVIGEGSMIDMNAVLGGRATVGKNCHVGAGAVLAGVIEPPSAKPVIVEDDVVIGANVVVLEGVTVGKGAVVAAGAVVTEDVPPYTVVAGTPARVIKEIDEKTKAKTEIKQELRQLNPEK.

This sequence belongs to the transferase hexapeptide repeat family. DapH subfamily.

It catalyses the reaction (S)-2,3,4,5-tetrahydrodipicolinate + acetyl-CoA + H2O = L-2-acetamido-6-oxoheptanedioate + CoA. It functions in the pathway amino-acid biosynthesis; L-lysine biosynthesis via DAP pathway; LL-2,6-diaminopimelate from (S)-tetrahydrodipicolinate (acetylase route): step 1/3. Functionally, catalyzes the transfer of an acetyl group from acetyl-CoA to tetrahydrodipicolinate. This is 2,3,4,5-tetrahydropyridine-2,6-dicarboxylate N-acetyltransferase from Bacillus cereus (strain AH187).